The chain runs to 1055 residues: Sodium/potassium exporting P-type ATPase 1 (1055 aa).

At 1–73 (MTPSIGYVDE…GADEKISISK (73 aa)) the chain is on the cytoplasmic side. The chain crosses the membrane as a helical span at residues 74–94 (ILAHQIFNAMVLVLIISLIIA). At 95-99 (LAIKD) the chain is on the extracellular side. The helical transmembrane segment at 100 to 120 (WISGGVIGFVVFINIFVGFIQ) threads the bilayer. At 121 to 298 (ELKAEKTMGS…TNVGTPLQRK (178 aa)) the chain is on the cytoplasmic side. A helical membrane pass occupies residues 299–319 (LSWLAILLFWVAVLFAIVVMA). The Extracellular portion of the chain corresponds to 320 to 328 (SQEMRVNRN). The helical transmembrane segment at 329 to 349 (VAIYAICVALSMIPSSLVVVL) threads the bilayer. Topologically, residues 350 to 789 (TITMAIGAQV…RMSSNIQKFV (440 aa)) are cytoplasmic. D385 (4-aspartylphosphate intermediate) is an active-site residue. Residues D385 and T387 each contribute to the Mg(2+) site. ATP is bound by residues T387, E491, K544, R586, T646, G647, D648, R705, and K711. Residue D730 coordinates Mg(2+). ATP is bound at residue N733. A helical membrane pass occupies residues 790–810 (LQLLAENVAQALYLMIGLAFI). Over 811 to 816 (DKSGYS) the chain is Extracellular. A helical membrane pass occupies residues 817-837 (VFPLSPVEVLWIIVVTSCFPA). Residues 838-866 (MGLGQEKASHDILEQPPNATIFTWEVIID) lie on the Cytoplasmic side of the membrane. A helical transmembrane segment spans residues 867–887 (MIAYGFWMAVCCLVCFVCIVY). The Extracellular portion of the chain corresponds to 888-913 (GKGDGSLGENCNEGSDTGCNLVFRGR). The chain crosses the membrane as a helical span at residues 914–934 (SGAFAAFTWCALLLAWECIHL). The Cytoplasmic portion of the chain corresponds to 935 to 962 (RLSFFKMRPELENPWWKQLAIDLWDNQF). The helical transmembrane segment at 963–983 (LFWSVMGAIVSVFPVVYIPVI) threads the bilayer. Topologically, residues 984–990 (NNKVFLH) are extracellular. A helical transmembrane segment spans residues 991–1011 (APIGYEWGLAVAFTILFLIGA). Topologically, residues 1012 to 1055 (EGWKWFKRVYYRKSNANNPEYDLERNDPFKEYSSFSKSNTMEIV) are cytoplasmic.

Belongs to the cation transport ATPase (P-type) (TC 3.A.3) family. Type IID subfamily. The cofactor is Mg(2+). Post-translationally, the active site is phosphorylated in presence of sodium or potassium and in conditions of higher pH. Not phosphorylated in presence of calcium ions.

It localises to the cell membrane. It carries out the reaction Na(+)(in) + ATP + H2O = Na(+)(out) + ADP + phosphate + H(+). It catalyses the reaction K(+)(in) + ATP + H2O = K(+)(out) + ADP + phosphate + H(+). Its function is as follows. Catalyzes the hydrolysis of ATP coupled with the export of sodium and potassium from the cell. May be an inefficient potassium exporter. May transport other cations such as lithium. Sodium/potassium efflux ATPases are involved in salt tolerance and maintaining the membrane potential across the plasma membrane in high salinity (Na+) or alkaline (K+) environments. This is Sodium/potassium exporting P-type ATPase 1 from Schwanniomyces occidentalis (Yeast).